The sequence spans 149 residues: Transcription antitermination protein NusB (149 aa).

This sequence belongs to the NusB family.

Its function is as follows. Involved in transcription antitermination. Required for transcription of ribosomal RNA (rRNA) genes. Binds specifically to the boxA antiterminator sequence of the ribosomal RNA (rrn) operons. The chain is Transcription antitermination protein NusB from Hahella chejuensis (strain KCTC 2396).